We begin with the raw amino-acid sequence, 952 residues long: MSSSEEADLLRLEEVFSTTLARTISLILQPLLLADPEPSDPCGKECLRLLQQLHESAQRLWYVTEQSLLSLRQRLYHPPSKGLEAVLLLSNADHVLQAHMEYIKSYTDCVVAQAFQKVSKKRSEFWRSQRKALRQLLSSGSSEGSVGTTMCQALRQPLSQHVQKYLLLLLSLRDTLDESHPAQELVMHAITLFGNLQSFMGQALDQAVATQALWHSLSSRLRDVLCSPAHRLLQDSQDIPVVVTPLRAERVLLFDDSLVLLQGHNTHTFDLKLVWVKPGQDKCVLHILTPEEEISFCTRDPQGQVVWQWKVTQAVCQALCGKKDFPVLGSGRETSVPPECRCVAYTFCREGRLCQATYDGEWCRAKPHGKGTLKWPDGRNHVGTFYQGLEHGFGICLVPQASEDKFDCYKCHWREGRMCEYGICEYGTDEVYKGYFQAGLRHGFGILESAPQAPQPFRYTGHWERGQRSGYGIEEDRDRGERYIGMWQADQRHGPGVVVTQAGVCYQGTFQGDKMAGPGILLCEDDSLYEGTFTRDLTLLGKGKVTFPNGFTLDGSFSSGTDKGLYTQGVLDTAALPPDPSSTRKRQLGLGTFPVESRWQGVYSPFRDFLRLGCPGEQQEALLGFHTQSSRELRKSQECLCCERSHPEDCVGSMEDTLKELLQHRKPKALQQYLRKALSNSRHPLGQLLRTLMLTFQATYSGIGANKHLQEMAQEEVKQHARELWAAYRGLLKVALQHQGQTLEEENMETRDLQVHGLLLPLILPSFYSELFTLYLLLHEREDGLYSRGITNLSLFPDTKLLEFLDVQKHLWPLKDLKLTSNQRYSLVRDKCFLTATECLQKIITTVHPREKLEVLEKTYGEIEATVSRVLGCKYKLPMDDLLPLLIYVVSRARIQHLGAEIHLIRDMMDPVHTGGLHDFLLTALESCYEHIQKEDMRPHHLPGHWDARDLW.

MORN repeat units lie at residues 358 to 380, 381 to 403, 409 to 431, 432 to 454, 459 to 481, 483 to 505, 506 to 528, and 529 to 552; these read YDGEWCRAKPHGKGTLKWPDGRN, HVGTFYQGLEHGFGICLVPQASE, YKCHWREGRMCEYGICEYGTDEV, YKGYFQAGLRHGFGILESAPQAP, YTGHWERGQRSGYGIEEDRDRGE, YIGMWQADQRHGPGVVVTQAGVC, YQGTFQGDKMAGPGILLCEDDSL, and YEGTFTRDLTLLGKGKVTFPNGFT. A VPS9 domain is found at 795-941; the sequence is LFPDTKLLEF…IQKEDMRPHH (147 aa).

Homodimer. Forms a heteromeric complex with ALS2. Interacts with ALS2 and RAB5A. As to expression, expressed in heart, lung, liver and kidney.

Its subcellular location is the cytoplasm. Its function is as follows. Acts as a guanine nucleotide exchange factor (GEF) for Rab5 GTPase. Regulates the ALS2-mediated endosome dynamics. This Mus musculus (Mouse) protein is ALS2 C-terminal-like protein (Als2cl).